The chain runs to 615 residues: Dehydrogenase str4 (615 aa).

FAD is bound by residues T45–A46, E66–A67, and N123–M126. The active-site Proton acceptor is H552. FAD-binding positions include A585 and P596 to A597.

It belongs to the GMC oxidoreductase family. As to quaternary structure, homodimer. FAD serves as cofactor.

It functions in the pathway mycotoxin biosynthesis. In terms of biological role, dehydrogenase; part of the gene cluster that mediates the biosynthesis of strobilurin A, an antifungal polyketide that contains a key beta-methoxyacrylate toxophore that targets the complex III of the mitochondrial electron transport chain. Strobilurin biosynthesis begins with construction of benzoyl CoA by step-wise elimination of ammonia from phenylalanine by the phenylalanine ammonia-lyase str11, oxygenation by str8 and retro-Claisen reaction to form benzoic acid, which is activated to its CoA thiolester benzoyl CoA by the dedicated CoA ligase str10. Benzoyl CoA forms the starter unit for the highly reducing polyketide synthase stpks1 that produces the polyketide prestrobilutin A. The FAD-dependent oxygenase str9 then catalyzes the key oxidative rearrangement responsible for the creation of the beta-methoxyacrylate toxophore. Str9 performs epoxidation of the 2,3 olefin of prestrobilutin A, followed by Meinwald rearrangement to furnish the aldehyde intermediate. Rapid enolization of the aldehyde intermediate would give the beta-methoxyacrylate skeleton and methylations catalyzed by str2 and str3 complete the synthesis and lead to the production of strobilurin A. The short-chain dehydrogenase stl2 and the dehydrogenase str4 play a role in the shunt pathway leading to the production of bolineol. The cluster encodes no obvious halogenase gene that could be involved in production of strobilurin B, nor any obvious dimethylallyl-transferase that could be involved in the production of strobilurin G. It is possible that unknown proteins encoded in, or near, the cluster (such as str1 or stl1) may form new classes of halogenases or dimethylally-transferases, or that the responsible genes are located elsewhere on the genome. Similarly, proteins encoded by str5/str6 hydrolases appear to have no chemical role in the biosynthesis of strobilurin A. Finally, no obvious self-resistance gene is found within the cluster. The protein is Dehydrogenase str4 of Strobilurus tenacellus.